Reading from the N-terminus, the 316-residue chain is uncharacterized protein (316 aa).

Disordered regions lie at residues 82–105 and 238–257; these read AMAAASTGAGSSSGTNVGGSSGGN and ASVSVQTTQQSRQQSTDTQE. 2 stretches are compositionally biased toward low complexity: residues 84-96 and 239-255; these read AAASTGAGSSSGT and SVSVQTTQQSRQQSTDT.

This sequence belongs to the MG307/MG309/MG338 family.

This is an uncharacterized protein from Mycoplasma pneumoniae (strain ATCC 29342 / M129 / Subtype 1) (Mycoplasmoides pneumoniae).